The following is a 679-amino-acid chain: Glycine--tRNA ligase beta subunit (679 aa).

Belongs to the class-II aminoacyl-tRNA synthetase family. In terms of assembly, tetramer of two alpha and two beta subunits.

The protein resides in the cytoplasm. It catalyses the reaction tRNA(Gly) + glycine + ATP = glycyl-tRNA(Gly) + AMP + diphosphate. The protein is Glycine--tRNA ligase beta subunit of Streptococcus pyogenes serotype M4 (strain MGAS10750).